Consider the following 365-residue polypeptide: Serine/threonine-protein phosphatase 2A activator 1 (365 aa).

The disordered stretch occupies residues 321–349 (YEAPSETSEKPAAGTAHTTTTTMPPPRMT). Positions 331–342 (PAAGTAHTTTTT) are enriched in low complexity.

The protein belongs to the PTPA-type PPIase family.

The protein localises to the cytoplasm. Its subcellular location is the nucleus. It catalyses the reaction [protein]-peptidylproline (omega=180) = [protein]-peptidylproline (omega=0). Its function is as follows. PPIases accelerate the folding of proteins. It catalyzes the cis-trans isomerization of proline imidic peptide bonds in oligopeptides. Acts as a regulatory subunit for PP2A-like phosphatases modulating their activity or substrate specificity, probably by inducing a conformational change in the catalytic subunit, a direct target of the PPIase. Can reactivate inactive phosphatase PP2A-phosphatase methylesterase complexes (PP2Ai) in presence of ATP and Mg(2+) by dissociating the inactive form from the complex. The chain is Serine/threonine-protein phosphatase 2A activator 1 (RRD1) from Eremothecium gossypii (strain ATCC 10895 / CBS 109.51 / FGSC 9923 / NRRL Y-1056) (Yeast).